The primary structure comprises 319 residues: Annexin A4 (319 aa).

A2 is modified (N-acetylalanine). At T7 the chain carries Phosphothreonine. Position 12 is a phosphoserine (S12). 4 Annexin repeats span residues 14 to 85 (FNAA…GMMT), 86 to 157 (PTVL…SLSA), 169 to 241 (ALMR…AIVK), and 245 to 316 (NKSA…ILCG). Residues K213, K293, and K300 each carry the N6-acetyllysine modification.

This sequence belongs to the annexin family. In terms of assembly, monomer. Binds to SFTPA1 in a Ca(2+)-dependent manner.

It is found in the zymogen granule membrane. Its function is as follows. May play a role in alveolar type II cells through interaction with the surfactant protein SFTPA1 (SP-A). The polypeptide is Annexin A4 (ANXA4) (Bos taurus (Bovine)).